Reading from the N-terminus, the 159-residue chain is Small ribosomal subunit protein bS6 (159 aa).

Residues Sec46 and Sec52 are each a non-standard amino acid (selenocysteine).

It belongs to the bacterial ribosomal protein bS6 family.

Binds together with bS18 to 16S ribosomal RNA. This is Small ribosomal subunit protein bS6 from Desulfotalea psychrophila (strain LSv54 / DSM 12343).